A 325-amino-acid polypeptide reads, in one-letter code: Biotin synthase (325 aa).

The region spanning F49–R278 is the Radical SAM core domain. 3 residues coordinate [4Fe-4S] cluster: C67, C71, and C74. [2Fe-2S] cluster is bound by residues S111, C143, C203, and R273.

It belongs to the radical SAM superfamily. Biotin synthase family. As to quaternary structure, homodimer. It depends on [4Fe-4S] cluster as a cofactor. The cofactor is [2Fe-2S] cluster.

The catalysed reaction is (4R,5S)-dethiobiotin + (sulfur carrier)-SH + 2 reduced [2Fe-2S]-[ferredoxin] + 2 S-adenosyl-L-methionine = (sulfur carrier)-H + biotin + 2 5'-deoxyadenosine + 2 L-methionine + 2 oxidized [2Fe-2S]-[ferredoxin]. The protein operates within cofactor biosynthesis; biotin biosynthesis; biotin from 7,8-diaminononanoate: step 2/2. In terms of biological role, catalyzes the conversion of dethiobiotin (DTB) to biotin by the insertion of a sulfur atom into dethiobiotin via a radical-based mechanism. In Clostridium tetani (strain Massachusetts / E88), this protein is Biotin synthase.